A 121-amino-acid chain; its full sequence is Large ribosomal subunit protein bL12 (121 aa).

This sequence belongs to the bacterial ribosomal protein bL12 family. Homodimer. Part of the ribosomal stalk of the 50S ribosomal subunit. Forms a multimeric L10(L12)X complex, where L10 forms an elongated spine to which 2 to 4 L12 dimers bind in a sequential fashion. Binds GTP-bound translation factors.

In terms of biological role, forms part of the ribosomal stalk which helps the ribosome interact with GTP-bound translation factors. Is thus essential for accurate translation. This is Large ribosomal subunit protein bL12 from Enterobacter sp. (strain 638).